The primary structure comprises 440 residues: Methylenetetrahydrofolate--tRNA-(uracil-5-)-methyltransferase TrmFO (440 aa).

14-19 serves as a coordination point for FAD; sequence GAGLAG.

Belongs to the MnmG family. TrmFO subfamily. Requires FAD as cofactor.

It localises to the cytoplasm. It catalyses the reaction uridine(54) in tRNA + (6R)-5,10-methylene-5,6,7,8-tetrahydrofolate + NADH + H(+) = 5-methyluridine(54) in tRNA + (6S)-5,6,7,8-tetrahydrofolate + NAD(+). It carries out the reaction uridine(54) in tRNA + (6R)-5,10-methylene-5,6,7,8-tetrahydrofolate + NADPH + H(+) = 5-methyluridine(54) in tRNA + (6S)-5,6,7,8-tetrahydrofolate + NADP(+). In terms of biological role, catalyzes the folate-dependent formation of 5-methyl-uridine at position 54 (M-5-U54) in all tRNAs. In Bdellovibrio bacteriovorus (strain ATCC 15356 / DSM 50701 / NCIMB 9529 / HD100), this protein is Methylenetetrahydrofolate--tRNA-(uracil-5-)-methyltransferase TrmFO.